The chain runs to 32 residues: Alpha-amylase inhibitor AAI (32 aa).

3 disulfide bridges follow: cysteine 1-cysteine 18, cysteine 8-cysteine 23, and cysteine 17-cysteine 31.

As to expression, endosperm.

Its function is as follows. Alpha-amylase inhibitor. It is active against alpha-amylases from Tribolium castaneum and Prostephanus truncatus larvae. The sequence is that of Alpha-amylase inhibitor AAI (AAI) from Amaranthus hypochondriacus (Prince-of-Wales feather).